The sequence spans 390 residues: Chaperone protein DnaJ (390 aa).

Residues 6 to 70 (DYYEILGVPR…QKRAQYDQFG (65 aa)) enclose the J domain. Residues 146–228 (GSEKEIYVTR…CHGTGKVRRK (83 aa)) form a CR-type zinc finger. Zn(2+) is bound by residues Cys-159, Cys-162, Cys-176, Cys-179, Cys-202, Cys-205, Cys-216, and Cys-219. CXXCXGXG motif repeat units lie at residues 159–166 (CPTCKGKG), 176–183 (CDMCNGTG), 202–209 (CPKCHGTG), and 216–223 (CHECHGTG).

Belongs to the DnaJ family. In terms of assembly, homodimer. It depends on Zn(2+) as a cofactor.

It is found in the cytoplasm. In terms of biological role, participates actively in the response to hyperosmotic and heat shock by preventing the aggregation of stress-denatured proteins and by disaggregating proteins, also in an autonomous, DnaK-independent fashion. Unfolded proteins bind initially to DnaJ; upon interaction with the DnaJ-bound protein, DnaK hydrolyzes its bound ATP, resulting in the formation of a stable complex. GrpE releases ADP from DnaK; ATP binding to DnaK triggers the release of the substrate protein, thus completing the reaction cycle. Several rounds of ATP-dependent interactions between DnaJ, DnaK and GrpE are required for fully efficient folding. Also involved, together with DnaK and GrpE, in the DNA replication of plasmids through activation of initiation proteins. The chain is Chaperone protein DnaJ from Dictyoglomus thermophilum (strain ATCC 35947 / DSM 3960 / H-6-12).